The primary structure comprises 176 residues: NAD(P)H-quinone oxidoreductase subunit 6, chloroplastic (176 aa).

A run of 5 helical transmembrane segments spans residues 10–30, 33–53, 61–81, 92–112, and 152–172; these read FLLV…VLLT, IYSA…HIPA, AQLL…VMFM, LWTV…VSLI, and FFLP…GAIA.

This sequence belongs to the complex I subunit 6 family. In terms of assembly, NDH is composed of at least 16 different subunits, 5 of which are encoded in the nucleus.

The protein localises to the plastid. Its subcellular location is the chloroplast thylakoid membrane. The enzyme catalyses a plastoquinone + NADH + (n+1) H(+)(in) = a plastoquinol + NAD(+) + n H(+)(out). It carries out the reaction a plastoquinone + NADPH + (n+1) H(+)(in) = a plastoquinol + NADP(+) + n H(+)(out). Functionally, NDH shuttles electrons from NAD(P)H:plastoquinone, via FMN and iron-sulfur (Fe-S) centers, to quinones in the photosynthetic chain and possibly in a chloroplast respiratory chain. The immediate electron acceptor for the enzyme in this species is believed to be plastoquinone. Couples the redox reaction to proton translocation, and thus conserves the redox energy in a proton gradient. This chain is NAD(P)H-quinone oxidoreductase subunit 6, chloroplastic (ndhG), found in Nandina domestica (Heavenly bamboo).